We begin with the raw amino-acid sequence, 36 residues long: Toxin Bcg III 29.21 (36 aa).

An intrachain disulfide couples Cys6 to Cys31.

It is found in the secreted. The protein resides in the nematocyst. The polypeptide is Toxin Bcg III 29.21 (Bunodosoma cangicum (Sea anemone)).